The primary structure comprises 278 residues: Elongation factor Ts (278 aa).

The tract at residues 80-83 (TDFV) is involved in Mg(2+) ion dislocation from EF-Tu.

The protein belongs to the EF-Ts family.

It is found in the cytoplasm. Functionally, associates with the EF-Tu.GDP complex and induces the exchange of GDP to GTP. It remains bound to the aminoacyl-tRNA.EF-Tu.GTP complex up to the GTP hydrolysis stage on the ribosome. This chain is Elongation factor Ts, found in Arthrobacter sp. (strain FB24).